The sequence spans 112 residues: SPbeta prophage-derived uncharacterized protein YoqB (112 aa).

The protein is SPbeta prophage-derived uncharacterized protein YoqB (yoqB) of Bacillus subtilis (strain 168).